A 167-amino-acid polypeptide reads, in one-letter code: Translationally-controlled tumor protein homolog (167 aa).

One can recognise a TCTP domain in the interval 1 to 167; the sequence is MLIYQDVLTG…WKDGLKEIKI (167 aa).

The protein belongs to the TCTP family.

The protein localises to the cytoplasm. The protein resides in the cytoskeleton. Functionally, involved in protein synthesis. Involved in microtubule stabilization. In Cryptococcus neoformans var. neoformans serotype D (strain B-3501A) (Filobasidiella neoformans), this protein is Translationally-controlled tumor protein homolog.